Reading from the N-terminus, the 332-residue chain is Succinylglutamate desuccinylase (332 aa).

Zn(2+) is bound by residues histidine 59, glutamate 62, and histidine 151. Glutamate 215 is an active-site residue.

The protein belongs to the AspA/AstE family. Succinylglutamate desuccinylase subfamily. Zn(2+) serves as cofactor.

The catalysed reaction is N-succinyl-L-glutamate + H2O = L-glutamate + succinate. The protein operates within amino-acid degradation; L-arginine degradation via AST pathway; L-glutamate and succinate from L-arginine: step 5/5. Transforms N(2)-succinylglutamate into succinate and glutamate. In Pseudomonas aeruginosa (strain UCBPP-PA14), this protein is Succinylglutamate desuccinylase.